The following is a 337-amino-acid chain: PHD finger protein 11 (337 aa).

A C2HC pre-PHD-type zinc finger spans residues 42–78 (KRICALCPKDLECSVLYFAQSENIAAHENCLLYSSAL). Residues 108 to 160 (LKCTFCGKKGATVGCDLKSCFKNYHFFCAKNDHAVLQADGRTGIYKVFCQQHA) form a PHD-type zinc finger.

Interacts with BRCA1 and RELA.

The protein localises to the nucleus. Functionally, positive regulator of Th1-type cytokine gene expression. The polypeptide is PHD finger protein 11 (PHF11) (Bos taurus (Bovine)).